A 41-amino-acid polypeptide reads, in one-letter code: Cuticle protein 32 (41 aa).

Tandem repeats lie at residues alanine 17–alanine 20, alanine 25–alanine 28, alanine 31–alanine 34, and alanine 38–alanine 41.

Its function is as follows. Component of the cuticle of migratory locust which contains more than 100 different structural proteins. This Locusta migratoria (Migratory locust) protein is Cuticle protein 32.